The chain runs to 538 residues: Cytochrome P450 monooxygenase xanG (538 aa).

A helical transmembrane segment spans residues 44-64 (MILYYLASIPLAIICYLAWYL). Asn378 carries an N-linked (GlcNAc...) asparagine glycan. Cys489 is a binding site for heme.

The protein belongs to the cytochrome P450 family. The cofactor is heme.

It is found in the membrane. The protein operates within secondary metabolite biosynthesis. Its function is as follows. Cytochrome P450 monooxygenase; part of the gene cluster that mediates the biosynthesis of the isocyanide xanthocillin and its derivatives. The first step of the pathway consists in the conversion of tyrosine into a vinyl-isonitrile intermediate by the isocyanide synthase xanB. Subsequent oxidative dimerization of this intermediate to form xanthocillin may involve the cytochrome P450 monooxygenase xanG, whose expression is coregulated with that of XanB. Xanthocillin can be further modified by the isonitrile hydratase-like protein xanA which introduces N-formyl groups and the methyltransferase xanE which introduces methyl groups, leading to the production of several derivatives including fumiformamide. Finally, fumiformamide can be subject to both oxidative and reductive cyclization to yield melanocins E and F, respectively. This Aspergillus fumigatus (strain ATCC MYA-4609 / CBS 101355 / FGSC A1100 / Af293) (Neosartorya fumigata) protein is Cytochrome P450 monooxygenase xanG.